The sequence spans 496 residues: 6-phosphogluconate dehydrogenase, decarboxylating (496 aa).

Residues 13 to 18 (GLDVSI), 24 to 26 (DNV), 68 to 70 (ITH), and N96 each bind NADP(+). Substrate is bound by residues N96 and 122-124 (SGG). K178 functions as the Proton acceptor in the catalytic mechanism. 181–182 (HN) contributes to the substrate binding site. E185 functions as the Proton donor in the catalytic mechanism. Residues R300 and H468 each contribute to the substrate site. The tract at residues 476–496 (PGEDPGPVSKGPHHYEWRPAK) is disordered.

The protein belongs to the 6-phosphogluconate dehydrogenase family. Homodimer.

It localises to the cytoplasm. The enzyme catalyses 6-phospho-D-gluconate + NADP(+) = D-ribulose 5-phosphate + CO2 + NADPH. It participates in carbohydrate degradation; pentose phosphate pathway; D-ribulose 5-phosphate from D-glucose 6-phosphate (oxidative stage): step 3/3. Its function is as follows. Catalyzes the oxidative decarboxylation of 6-phosphogluconate to ribulose 5-phosphate and CO(2), with concomitant reduction of NADP to NADPH. The chain is 6-phosphogluconate dehydrogenase, decarboxylating from Emericella nidulans (strain FGSC A4 / ATCC 38163 / CBS 112.46 / NRRL 194 / M139) (Aspergillus nidulans).